The following is a 1334-amino-acid chain: Rho1 guanine nucleotide exchange factor 1 (1334 aa).

Disordered stretches follow at residues 1 to 89, 135 to 182, 203 to 245, and 381 to 402; these read MDYR…ASPV, PQVS…SDSV, LDQN…TSGT, and SLIN…ASSP. A compositionally biased stretch (low complexity) spans 138–149; the sequence is SNHAPNNSNSPS. A compositionally biased stretch (polar residues) spans 150–164; it reads LTWHTSSGDDSNQNP. Residues 170 to 180 are compositionally biased toward low complexity; it reads QSQSSTSPVSD. Polar residues-rich tracts occupy residues 213–227, 234–245, and 381–400; these read VRSS…NSRL, HTVGSHSFTSGT, and SLIN…SEAS. A Phosphoserine modification is found at Ser-381. In terms of domain architecture, DH spans 621-808; that stretch reads KRQEVICEVI…RGFLSRLNVE (188 aa). The PH domain maps to 843 to 973; it reads QLIFKGPLKK…WLEHIDNQQT (131 aa). Residues 995–1293 enclose the CNH domain; that stretch reads DNKVNAIGVY…RLLADGRGKL (299 aa).

Its subcellular location is the cytoplasm. Functionally, stimulates the exchange of Rho1 and Rho5 GDP-bound form into GTP-bound form. Controls septum formation, cell wall synthesis and localization of F-actin patches. Coordinates actin deposition with cell wall biosynthesis during bipolar growth. The polypeptide is Rho1 guanine nucleotide exchange factor 1 (rgf1) (Schizosaccharomyces pombe (strain 972 / ATCC 24843) (Fission yeast)).